We begin with the raw amino-acid sequence, 72 residues long: Probable protein E5B (72 aa).

The protein is Probable protein E5B of Homo sapiens (Human).